Consider the following 342-residue polypeptide: Type II restriction enzyme CviAII (342 aa).

The enzyme catalyses Endonucleolytic cleavage of DNA to give specific double-stranded fragments with terminal 5'-phosphates.. Functionally, a P subtype restriction enzyme that recognizes the double-stranded sequence 5'-CATG-3' and cleaves after C-1. This Chlorella (PBCV-1) protein is Type II restriction enzyme CviAII (CVIAIIR).